The primary structure comprises 502 residues: Probable cytosol aminopeptidase (502 aa).

Residues Lys265 and Asp270 each coordinate Mn(2+). Lys277 is an active-site residue. Residues Asp288, Asp347, and Glu349 each coordinate Mn(2+). The active site involves Arg351.

The protein belongs to the peptidase M17 family. It depends on Mn(2+) as a cofactor.

It is found in the cytoplasm. The catalysed reaction is Release of an N-terminal amino acid, Xaa-|-Yaa-, in which Xaa is preferably Leu, but may be other amino acids including Pro although not Arg or Lys, and Yaa may be Pro. Amino acid amides and methyl esters are also readily hydrolyzed, but rates on arylamides are exceedingly low.. The enzyme catalyses Release of an N-terminal amino acid, preferentially leucine, but not glutamic or aspartic acids.. Functionally, presumably involved in the processing and regular turnover of intracellular proteins. Catalyzes the removal of unsubstituted N-terminal amino acids from various peptides. This is Probable cytosol aminopeptidase from Rickettsia bellii (strain OSU 85-389).